Reading from the N-terminus, the 462-residue chain is Zinc finger CCCH domain-containing protein 8 (462 aa).

6 C3H1-type zinc fingers span residues 105–133 (RPGE…HPQW), 156–184 (QEGE…HPKE), 209–237 (RPSE…HPKD), 288–316 (RPGE…HPDR), 367–395 (RPGA…HPID), and 422–450 (REDA…HPPP).

This Oryza sativa subsp. japonica (Rice) protein is Zinc finger CCCH domain-containing protein 8.